Consider the following 149-residue polypeptide: Nucleoside diphosphate kinase (149 aa).

Residues Lys-9, Phe-57, Arg-85, Thr-91, Arg-102, and Asn-112 each coordinate ATP. His-115 serves as the catalytic Pros-phosphohistidine intermediate.

This sequence belongs to the NDK family. As to quaternary structure, homotetramer. Mg(2+) serves as cofactor.

It localises to the cytoplasm. The catalysed reaction is a 2'-deoxyribonucleoside 5'-diphosphate + ATP = a 2'-deoxyribonucleoside 5'-triphosphate + ADP. It carries out the reaction a ribonucleoside 5'-diphosphate + ATP = a ribonucleoside 5'-triphosphate + ADP. Functionally, major role in the synthesis of nucleoside triphosphates other than ATP. The ATP gamma phosphate is transferred to the NDP beta phosphate via a ping-pong mechanism, using a phosphorylated active-site intermediate. This is Nucleoside diphosphate kinase from Desulfitobacterium hafniense (strain DSM 10664 / DCB-2).